Reading from the N-terminus, the 74-residue chain is U5-theraphotoxin-Cg1a (74 aa).

A signal peptide spans 1–19; sequence MNATIFALLLLLNLAMYNA. Positions 20–39 are excised as a propeptide; it reads AEQSSETDMDDTLLIPENYR. 3 cysteine pairs are disulfide-bonded: Cys42/Cys56, Cys49/Cys61, and Cys55/Cys71.

This sequence belongs to the neurotoxin 36 family. 01 subfamily. As to expression, expressed by the venom gland.

Its subcellular location is the secreted. Probable ion channel inhibitor. This is U5-theraphotoxin-Cg1a from Chilobrachys guangxiensis (Chinese earth tiger tarantula).